The chain runs to 393 residues: Nuclear speckle splicing regulatory protein 1 homolog (393 aa).

The interval 1–49 (MSAPPKRFGLIVKQKEEPKRAPVRVSSVFGDDDDDEAPATATNTSSASV) is disordered. Over residues 39 to 48 (ATATNTSSAS) the composition is skewed to low complexity. Positions 76–166 (NYDEIQAIKN…YREQEAEEAA (91 aa)) form a coiled coil. The interval 187–350 (LLNDLARDPT…SLKDKLKPKR (164 aa)) is disordered. Residues 199-209 (KQRKMEKKNVR) show a composition bias toward basic residues. 4 stretches are compositionally biased toward basic and acidic residues: residues 222–236 (EDVKKKEEPKKKSIY), 243–261 (DEKKSKAPEAPKKNFEGEL), 317–333 (DHAQRNQREKTKSKSPE), and 341–350 (SLKDKLKPKR).

This sequence belongs to the NSRP1 family.

The sequence is that of Nuclear speckle splicing regulatory protein 1 homolog from Caenorhabditis briggsae.